A 111-amino-acid chain; its full sequence is Ribosome-binding factor A (111 aa).

It belongs to the RbfA family. Monomer. Binds 30S ribosomal subunits, but not 50S ribosomal subunits or 70S ribosomes.

Its subcellular location is the cytoplasm. One of several proteins that assist in the late maturation steps of the functional core of the 30S ribosomal subunit. Associates with free 30S ribosomal subunits (but not with 30S subunits that are part of 70S ribosomes or polysomes). Required for efficient processing of 16S rRNA. May interact with the 5'-terminal helix region of 16S rRNA. The chain is Ribosome-binding factor A from Helicobacter pylori (strain J99 / ATCC 700824) (Campylobacter pylori J99).